Here is a 256-residue protein sequence, read N- to C-terminus: Omega-amidase YafV (256 aa).

Positions 4–234 (LKITLLQQPL…ATRIDAELSM (231 aa)) constitute a CN hydrolase domain. Glutamate 42 acts as the Proton acceptor in catalysis. Lysine 107 is an active-site residue. Cysteine 141 serves as the catalytic Nucleophile.

The protein belongs to the carbon-nitrogen hydrolase superfamily. NIT1/NIT2 family.

It catalyses the reaction a monoamide of a dicarboxylate + H2O = a dicarboxylate + NH4(+). Its function is as follows. Hydrolyzes alpha-ketoglutaramate (a-KGM) to alpha-ketoglutarate (alpha-KG) and ammonia (specific activity 6.65 umol/min/mg), has weak activity on L-glutamine, almost no activity on deaminated glutathione (dGSH) and none on glutathione. May function as a metabolite repair enzyme. The protein is Omega-amidase YafV (yafV) of Escherichia coli (strain B / BL21-DE3).